Reading from the N-terminus, the 274-residue chain is MAIHLYKTSTPSTRNGTVGSQVKSNPRNNLIYGQRRCGKGRNARGIITARHRGGGHKRLYRKIDFRRNEKDISGRIVTIEYDPNRNAYICLIHYGDGEKRYILHPRGAIIGDTIVSGTEVPISMGNALPLTDMPLGTAIHNIEITLGKGGQLARAAGAVAKLIAKEGKSATLKLPSGEVRLISKNCSATVGQVGNVGVNQKSLGRAGSKRWLGKRPVVRGVVMNPVDHPHGGGEGRAPIGRKKPTTPWGYPALGRRSRKRNKYSDSLILRRRSK.

Disordered regions lie at residues 1–23 and 223–274; these read MAIH…SQVK and MNPV…RRSK. Polar residues predominate over residues 7–23; it reads KTSTPSTRNGTVGSQVK.

Belongs to the universal ribosomal protein uL2 family. In terms of assembly, part of the 50S ribosomal subunit.

The protein resides in the plastid. Its subcellular location is the chloroplast. In Nandina domestica (Heavenly bamboo), this protein is Large ribosomal subunit protein uL2cz/uL2cy (rpl2-A).